The chain runs to 67 residues: Gene 51 protein (67 aa).

In Mycobacterium (Mycobacteriophage L5), this protein is Gene 51 protein (51).